Reading from the N-terminus, the 176-residue chain is Inner membrane-spanning protein YciB (176 aa).

5 helical membrane-spanning segments follow: residues 24-44 (TATA…AFRH), 49-69 (PMLW…LVLH), 76-96 (WKPT…QLAF), 119-139 (LSVV…FVAY), and 149-169 (FKLF…SLWL).

The protein belongs to the YciB family.

Its subcellular location is the cell inner membrane. Plays a role in cell envelope biogenesis, maintenance of cell envelope integrity and membrane homeostasis. The chain is Inner membrane-spanning protein YciB from Paraburkholderia phytofirmans (strain DSM 17436 / LMG 22146 / PsJN) (Burkholderia phytofirmans).